Here is a 971-residue protein sequence, read N- to C-terminus: Zinc finger CCCH domain-containing protein 7A (971 aa).

TPR repeat units lie at residues 43-76 (VRNLFNEGNDVYREHDWNNSISQYTEALNIADYA), 89-122 (EKLYINRIACYSNMGFHDKVLEDCNIVLSLNASN), and 124-156 (KALYRKSKALSDLGRYKKAYDAVAKCSLAVPQD). Thr-210 is modified (phosphothreonine). C3H1-type zinc fingers lie at residues 634-656 (LCRHEVRYGCLREDECFYAHSLV) and 769-797 (PLQFDLCNHIASGKKCQYVGNCSFAHSPE). The C2H2-type zinc finger occupies 857–881 (FHCWMCGKNCNSEKQWQGHISSEKH). Residues 906 to 928 (ICDRYMNGTCPEGNSCKFAHGNA) form a C3H1-type 3 zinc finger. A coiled-coil region spans residues 924–952 (AHGNAELHEWEERRDALKMKLNKARKDHL).

The protein localises to the nucleus. May be a specific regulator of miRNA biogenesis. Binds to microRNAs MIR7-1, MIR16-2 and MIR29A hairpins recognizing the 3'-ATA(A/T)-5' motif in the apical loop. This chain is Zinc finger CCCH domain-containing protein 7A (ZC3H7A), found in Homo sapiens (Human).